Here is a 197-residue protein sequence, read N- to C-terminus: Class A basic helix-loop-helix protein 15 (197 aa).

Residues Met1–Thr12 show a composition bias toward basic residues. 2 disordered regions span residues Met1–Arg82 and Thr175–Ser197. A phosphothreonine mark is found at Thr12 and Thr25. Residues Asp27–Ser36 show a composition bias toward polar residues. The span at Ser65–Arg82 shows a compositional bias: basic and acidic residues. The bHLH domain occupies Gln72–Leu124.

Forms homodimers or heterodimers with TCF3 gene products E12 and E47. These dimers bind to the E-box site, however, heterodimer with MYOD1 does not bind target DNA. Expressed in liver, spleen and olfactory epithelium. Weaker expression is seen in skeletal muscle, cardiac muscle, eye and brain tissue.

Its subcellular location is the nucleus. Plays a role in controlling the transcriptional activity of MyoD, ensuring that expanding myoblast populations remain undifferentiated. Repression may occur through muscle-specific E-box occupancy by homodimers. May also negatively regulate bHLH-mediated transcription through an N-terminal repressor domain. Serves as a key regulator of acinar cell function, stability, and identity. Also required for normal organelle localization in exocrine cells and for mitochondrial calcium ion transport. May function as a unique regulator of gene expression in several different embryonic and postnatal cell lineages. Binds to the E-box consensus sequence 5'-CANNTG-3'. This is Class A basic helix-loop-helix protein 15 (Bhlha15) from Rattus norvegicus (Rat).